The sequence spans 196 residues: Putative NADH dehydrogenase/NAD(P)H nitroreductase Smal_0358 (196 aa).

The protein belongs to the nitroreductase family. HadB/RutE subfamily. The cofactor is FMN.

The polypeptide is Putative NADH dehydrogenase/NAD(P)H nitroreductase Smal_0358 (Stenotrophomonas maltophilia (strain R551-3)).